Reading from the N-terminus, the 173-residue chain is UPF0316 protein Bsph_0745 (173 aa).

3 helical membrane passes run 4-24, 31-51, and 58-78; these read IVLI…RTIF, FLAA…LSLV, and MLAM…GAKI.

Belongs to the UPF0316 family.

The protein localises to the cell membrane. This Lysinibacillus sphaericus (strain C3-41) protein is UPF0316 protein Bsph_0745.